The primary structure comprises 339 residues: Dihydroorotate dehydrogenase (quinone) (339 aa).

Residues 62-66 (AGLDK) and Thr86 each bind FMN. Lys66 lines the substrate pocket. 111 to 115 (NRMGF) lines the substrate pocket. 2 residues coordinate FMN: Asn139 and Asn172. Asn172 contributes to the substrate binding site. Residue Ser175 is the Nucleophile of the active site. Position 177 (Asn177) interacts with substrate. The FMN site is built by Lys217 and Thr245. Residue 246–247 (NT) coordinates substrate. FMN is bound by residues Gly268, Gly297, and 318–319 (YS).

The protein belongs to the dihydroorotate dehydrogenase family. Type 2 subfamily. As to quaternary structure, monomer. The cofactor is FMN.

The protein localises to the cell membrane. The catalysed reaction is (S)-dihydroorotate + a quinone = orotate + a quinol. Its pathway is pyrimidine metabolism; UMP biosynthesis via de novo pathway; orotate from (S)-dihydroorotate (quinone route): step 1/1. Functionally, catalyzes the conversion of dihydroorotate to orotate with quinone as electron acceptor. In Shewanella denitrificans (strain OS217 / ATCC BAA-1090 / DSM 15013), this protein is Dihydroorotate dehydrogenase (quinone).